Consider the following 158-residue polypeptide: MLSPKRVKFRKQQRGRMRGVATRGNTIAFGEFALQAQECGWITSRQIEASRRAMTRYVKRGGKIWIRIFPDKPVTMRAAETRMGSGKGNPEFWVAVIKPGRILFEMGGEEITPEIAKEAMRLAQYKLPVKTKFIALGDEEKTAGAKTPAASKAVTVES.

It belongs to the universal ribosomal protein uL16 family. In terms of assembly, part of the 50S ribosomal subunit.

Its function is as follows. Binds 23S rRNA and is also seen to make contacts with the A and possibly P site tRNAs. The sequence is that of Large ribosomal subunit protein uL16 from Synechococcus sp. (strain CC9902).